The chain runs to 540 residues: Chaperonin GroEL 4 (540 aa).

Residues 29 to 32, 86 to 90, Gly413, 477 to 479, and Asp493 contribute to the ATP site; these read TLGP, DGTTT, and NAA.

It belongs to the chaperonin (HSP60) family. In terms of assembly, forms a cylinder of 14 subunits composed of two heptameric rings stacked back-to-back. Interacts with the co-chaperonin GroES.

The protein resides in the cytoplasm. The catalysed reaction is ATP + H2O + a folded polypeptide = ADP + phosphate + an unfolded polypeptide.. Functionally, together with its co-chaperonin GroES, plays an essential role in assisting protein folding. The GroEL-GroES system forms a nano-cage that allows encapsulation of the non-native substrate proteins and provides a physical environment optimized to promote and accelerate protein folding. The chain is Chaperonin GroEL 4 from Frankia casuarinae (strain DSM 45818 / CECT 9043 / HFP020203 / CcI3).